Here is an 84-residue protein sequence, read N- to C-terminus: MKTLLLTLVVVTIVCLDLGYTLKCYVGRKPYKLITCPEGSKKCATVPLPTRPLPIFSKGCYTSCPSQYVKCCSTDLCNGSPTSG.

An N-terminal signal peptide occupies residues 1 to 21 (MKTLLLTLVVVTIVCLDLGYT). 4 disulfide bridges follow: Cys24/Cys43, Cys36/Cys60, Cys64/Cys71, and Cys72/Cys77.

It belongs to the three-finger toxin family. Short-chain subfamily. Expressed by the venom gland.

The protein resides in the secreted. The chain is Three-finger toxin MALT0070C from Micrurus altirostris (Uruguayan coral snake).